A 470-amino-acid polypeptide reads, in one-letter code: O-acyltransferase pboC (470 aa).

Residues His149 and Asp386 each act as proton acceptor in the active site.

The protein belongs to the plant acyltransferase family. As to quaternary structure, monomer.

It participates in secondary metabolite biosynthesis. O-acetyltransferase; part of the gene cluster that mediates the biosynthesis of protubonine B, a hydroxylated and diacetylated cyclo-L-Trp-L-Leu derivative. Within the pathway, pboC catalyzes the acetylation of protubonine D at the hydroxy group to produce protubonine C. The first step of the protubonine B synthesis is performed by the nonribosomal peptide synthetase pboA that catalyzes the formation of cyclo-L-Trp-L-Leu by condensing L-Leu with L-Trp. The flavin-dependent monooxygenase pboD is responsible for hydroxylation at C-3 of the indole ring and subsequent formation of the pyrrolidine ring, leadind to protubonine D. Protubonine D is further diacetylated by two acetyltransferases, pboB and pboC, to form the final product protubonine B via protubonine C. The sequence is that of O-acyltransferase pboC from Aspergillus ustus.